Here is a 54-residue protein sequence, read N- to C-terminus: Large ribosomal subunit protein bL33 (54 aa).

It belongs to the bacterial ribosomal protein bL33 family.

This Roseiflexus castenholzii (strain DSM 13941 / HLO8) protein is Large ribosomal subunit protein bL33.